Reading from the N-terminus, the 296-residue chain is Ribosomal RNA small subunit methyltransferase A (296 aa).

S-adenosyl-L-methionine-binding residues include Asn-30, Leu-32, Gly-57, Glu-78, Asp-103, and Asn-128.

This sequence belongs to the class I-like SAM-binding methyltransferase superfamily. rRNA adenine N(6)-methyltransferase family. RsmA subfamily.

The protein resides in the cytoplasm. It catalyses the reaction adenosine(1518)/adenosine(1519) in 16S rRNA + 4 S-adenosyl-L-methionine = N(6)-dimethyladenosine(1518)/N(6)-dimethyladenosine(1519) in 16S rRNA + 4 S-adenosyl-L-homocysteine + 4 H(+). In terms of biological role, specifically dimethylates two adjacent adenosines (A1518 and A1519) in the loop of a conserved hairpin near the 3'-end of 16S rRNA in the 30S particle. May play a critical role in biogenesis of 30S subunits. This Staphylococcus epidermidis (strain ATCC 35984 / DSM 28319 / BCRC 17069 / CCUG 31568 / BM 3577 / RP62A) protein is Ribosomal RNA small subunit methyltransferase A.